We begin with the raw amino-acid sequence, 156 residues long: DNA mismatch endonuclease Vsr (156 aa).

Positions 51 and 63 each coordinate Mg(2+).

Belongs to the Vsr family. Mg(2+) is required as a cofactor. The cofactor is Zn(2+).

Functionally, deamination of 5-methylcytosine in DNA results in T/G mismatches. If unrepaired, these mismatches can lead to C-to-T transition mutations. The very short patch (VSP) repair process in E.coli counteracts the mutagenic process by repairing the mismatches in favor of the G-containing strand. This enzyme is an endonuclease that nicks double-stranded DNA within the sequence CT(AT)GN or NT(AT)GG next to the thymidine residue that is mismatched to 2'-deoxyguanosine. The incision is mismatch-dependent and strand-specific. This chain is DNA mismatch endonuclease Vsr, found in Escherichia coli (strain K12).